A 664-amino-acid chain; its full sequence is DNA ligase (664 aa).

Residues 34 to 38, 83 to 84, and Glu-114 contribute to the NAD(+) site; these read DAEYD and SL. The active-site N6-AMP-lysine intermediate is the Lys-116. Arg-137, Glu-172, Lys-288, and Lys-312 together coordinate NAD(+). Residues Cys-406, Cys-409, Cys-424, and Cys-429 each contribute to the Zn(2+) site. Residues 586–664 form the BRCT domain; that stretch reads VRDNRLEGLT…EEEFRQMVMS (79 aa).

It belongs to the NAD-dependent DNA ligase family. LigA subfamily. Requires Mg(2+) as cofactor. It depends on Mn(2+) as a cofactor.

It carries out the reaction NAD(+) + (deoxyribonucleotide)n-3'-hydroxyl + 5'-phospho-(deoxyribonucleotide)m = (deoxyribonucleotide)n+m + AMP + beta-nicotinamide D-nucleotide.. Functionally, DNA ligase that catalyzes the formation of phosphodiester linkages between 5'-phosphoryl and 3'-hydroxyl groups in double-stranded DNA using NAD as a coenzyme and as the energy source for the reaction. It is essential for DNA replication and repair of damaged DNA. In Carboxydothermus hydrogenoformans (strain ATCC BAA-161 / DSM 6008 / Z-2901), this protein is DNA ligase.